The primary structure comprises 63 residues: Small ribosomal subunit protein eS31 (63 aa).

Zn(2+)-binding residues include Cys-34, Cys-37, Cys-53, and Cys-56. The C4-type zinc finger occupies 34-56 (CPKCGSVMAFHREPVPRWHCGKC).

The protein belongs to the eukaryotic ribosomal protein eS31 family. Part of the 30S ribosomal subunit. It depends on Zn(2+) as a cofactor.

The protein is Small ribosomal subunit protein eS31 of Pyrobaculum neutrophilum (strain DSM 2338 / JCM 9278 / NBRC 100436 / V24Sta) (Thermoproteus neutrophilus).